Here is a 447-residue protein sequence, read N- to C-terminus: ATP-dependent protease ATPase subunit HslU (447 aa).

ATP is bound by residues Ile-17 and 59-64 (GVGKTE). The segment at 136 to 160 (PPARGGFQGEPTAEEKPTEKKESAT) is disordered. The span at 148 to 159 (AEEKPTEKKESA) shows a compositional bias: basic and acidic residues. Positions 260, 325, and 397 each coordinate ATP.

It belongs to the ClpX chaperone family. HslU subfamily. A double ring-shaped homohexamer of HslV is capped on each side by a ring-shaped HslU homohexamer. The assembly of the HslU/HslV complex is dependent on binding of ATP.

It is found in the cytoplasm. ATPase subunit of a proteasome-like degradation complex; this subunit has chaperone activity. The binding of ATP and its subsequent hydrolysis by HslU are essential for unfolding of protein substrates subsequently hydrolyzed by HslV. HslU recognizes the N-terminal part of its protein substrates and unfolds these before they are guided to HslV for hydrolysis. The polypeptide is ATP-dependent protease ATPase subunit HslU (Coxiella burnetii (strain Dugway 5J108-111)).